The sequence spans 479 residues: uncharacterized protein (479 aa).

8 helical membrane passes run 25–45, 63–83, 110–130, 133–153, 175–195, 229–249, 287–307, and 328–348; these read VVFV…LFFF, IAMI…LAGG, LFGP…TVIF, GVFN…AGIL, VLSI…VLGI, ILLY…IVWL, LILN…IAFI, and LFAP…LLLL.

It in the C-terminal section; belongs to the GatC family.

It localises to the cell membrane. This is an uncharacterized protein from Mycoplasma pneumoniae (strain ATCC 29342 / M129 / Subtype 1) (Mycoplasmoides pneumoniae).